The following is a 257-amino-acid chain: MRYALGVEYDGSEFQGWQQLGEHGGPSVQATLQAALSSVADAPIQVVCAGRTDAGVHGECQVVHFDSDARREPRGWMLGTTARLPPSVAVRWCVPAAEDFHARFSARARRYRYRLLNRQIRPALYRQTLSWERRPLDAQAMHTAAQALLGENDFGAFRSVQCQALHARRNLQAITVQRLGEVVEVQVQANAFLHHMVRNIVGSLILVGTGEQPIDWIATLLAGRDRTVAGPTAPPQGLVFIGPLYPAEWHLPAEVTQ.

Aspartate 53 serves as the catalytic Nucleophile. Tyrosine 111 contacts substrate.

The protein belongs to the tRNA pseudouridine synthase TruA family. As to quaternary structure, homodimer.

The catalysed reaction is uridine(38/39/40) in tRNA = pseudouridine(38/39/40) in tRNA. Functionally, formation of pseudouridine at positions 38, 39 and 40 in the anticodon stem and loop of transfer RNAs. The sequence is that of tRNA pseudouridine synthase A from Xanthomonas campestris pv. campestris (strain 8004).